We begin with the raw amino-acid sequence, 930 residues long: Translation initiation factor IF-2 (930 aa).

A compositionally biased stretch (low complexity) spans 50–67 (FKPAAAPKVEAKPAAPKV). 2 disordered regions span residues 50-217 (FKPA…SSEE) and 260-346 (EVVP…HELP). Composition is skewed to basic and acidic residues over residues 68-90 (SAEK…EAKP) and 110-125 (FKAE…AERR). A compositionally biased stretch (low complexity) spans 129 to 141 (KGNNRDQQQNGNR). 2 stretches are compositionally biased toward basic and acidic residues: residues 157–167 (RDNRRFNDQAK) and 262–295 (VPEK…DGPR). Residues 309 to 318 (NQKNSNWNNN) show a composition bias toward low complexity. Residues 337 to 346 (VTERKFHELP) are compositionally biased toward basic and acidic residues. In terms of domain architecture, tr-type G spans 432–599 (ERPPVVTIMG…TVLLVAEIQE (168 aa)). Residues 441–448 (GHVDHGKT) are G1. Residue 441 to 448 (GHVDHGKT) coordinates GTP. A G2 region spans residues 466 to 470 (GITQH). Residues 487–490 (DTPG) form a G3 region. Residues 487–491 (DTPGH) and 541–544 (NKID) each bind GTP. The G4 stretch occupies residues 541–544 (NKID). The tract at residues 577–579 (SAK) is G5.

The protein belongs to the TRAFAC class translation factor GTPase superfamily. Classic translation factor GTPase family. IF-2 subfamily.

The protein localises to the cytoplasm. Functionally, one of the essential components for the initiation of protein synthesis. Protects formylmethionyl-tRNA from spontaneous hydrolysis and promotes its binding to the 30S ribosomal subunits. Also involved in the hydrolysis of GTP during the formation of the 70S ribosomal complex. In Streptococcus pneumoniae (strain Taiwan19F-14), this protein is Translation initiation factor IF-2.